We begin with the raw amino-acid sequence, 88 residues long: UPF0297 protein RBAM_024500 (88 aa).

This sequence belongs to the UPF0297 family.

This is UPF0297 protein RBAM_024500 from Bacillus velezensis (strain DSM 23117 / BGSC 10A6 / LMG 26770 / FZB42) (Bacillus amyloliquefaciens subsp. plantarum).